The chain runs to 150 residues: Protein SLM6 (150 aa).

The Extracellular segment spans residues 1 to 76 (MCSRFSSTSL…SLLRSGVFPS (76 aa)). The helical transmembrane segment at 77 to 97 (WLFCMFSSILALAISNSFFFF) threads the bilayer. Residues 98–104 (SSNACFS) are Cytoplasmic-facing. Residues 105-125 (LLFNSFLVTGFSFSADLLVLA) form a helical membrane-spanning segment. Over 126-150 (AAADTLESNVSNDIGGNCATRLFKL) the chain is Extracellular.

It localises to the membrane. This is Protein SLM6 from Saccharomyces cerevisiae (strain ATCC 204508 / S288c) (Baker's yeast).